Reading from the N-terminus, the 183-residue chain is Threonylcarbamoyl-AMP synthase (183 aa).

Residues Met1–Gly183 enclose the YrdC-like domain.

It belongs to the SUA5 family. TsaC subfamily.

The protein resides in the cytoplasm. It catalyses the reaction L-threonine + hydrogencarbonate + ATP = L-threonylcarbamoyladenylate + diphosphate + H2O. Required for the formation of a threonylcarbamoyl group on adenosine at position 37 (t(6)A37) in tRNAs that read codons beginning with adenine. Catalyzes the conversion of L-threonine, HCO(3)(-)/CO(2) and ATP to give threonylcarbamoyl-AMP (TC-AMP) as the acyladenylate intermediate, with the release of diphosphate. The polypeptide is Threonylcarbamoyl-AMP synthase (Mannheimia succiniciproducens (strain KCTC 0769BP / MBEL55E)).